Consider the following 496-residue polypeptide: Glutamate--tRNA ligase (496 aa).

The short motif at 12-22 is the 'HIGH' region element; sequence PSPTGTPHVGL. The 'KMSKS' region signature appears at 256–260; the sequence is KLSKR. K259 is an ATP binding site.

This sequence belongs to the class-I aminoacyl-tRNA synthetase family. Glutamate--tRNA ligase type 1 subfamily. Monomer.

It is found in the cytoplasm. The enzyme catalyses tRNA(Glu) + L-glutamate + ATP = L-glutamyl-tRNA(Glu) + AMP + diphosphate. Its function is as follows. Catalyzes the attachment of glutamate to tRNA(Glu) in a two-step reaction: glutamate is first activated by ATP to form Glu-AMP and then transferred to the acceptor end of tRNA(Glu). The polypeptide is Glutamate--tRNA ligase (Mycobacteroides abscessus (strain ATCC 19977 / DSM 44196 / CCUG 20993 / CIP 104536 / JCM 13569 / NCTC 13031 / TMC 1543 / L948) (Mycobacterium abscessus)).